The following is a 312-amino-acid chain: Methionyl-tRNA formyltransferase (312 aa).

112 to 115 (SLLP) is a (6S)-5,6,7,8-tetrahydrofolate binding site.

Belongs to the Fmt family.

It catalyses the reaction L-methionyl-tRNA(fMet) + (6R)-10-formyltetrahydrofolate = N-formyl-L-methionyl-tRNA(fMet) + (6S)-5,6,7,8-tetrahydrofolate + H(+). In terms of biological role, attaches a formyl group to the free amino group of methionyl-tRNA(fMet). The formyl group appears to play a dual role in the initiator identity of N-formylmethionyl-tRNA by promoting its recognition by IF2 and preventing the misappropriation of this tRNA by the elongation apparatus. In Dehalococcoides mccartyi (strain CBDB1), this protein is Methionyl-tRNA formyltransferase.